Here is a 451-residue protein sequence, read N- to C-terminus: Putative gluconeogenesis factor (451 aa).

Belongs to the gluconeogenesis factor family.

It is found in the cytoplasm. In terms of biological role, required for morphogenesis under gluconeogenic growth conditions. The polypeptide is Putative gluconeogenesis factor (Clostridium acetobutylicum (strain ATCC 824 / DSM 792 / JCM 1419 / IAM 19013 / LMG 5710 / NBRC 13948 / NRRL B-527 / VKM B-1787 / 2291 / W)).